The sequence spans 576 residues: Aspartate--tRNA ligase, cytoplasmic 1 (576 aa).

Residues 1 to 78 (MSETTPVPVG…NWGELPMNQS (78 aa)) are disordered. Residues 20–43 (LKKEQKKLEKEKKIAEAKAKKAAE) show a composition bias toward basic and acidic residues. Glu302 is a binding site for L-aspartate. The tract at residues 324–327 (QLYK) is aspartate. Residue Arg346 coordinates L-aspartate. ATP is bound by residues 346–348 (RAE), 354–356 (RHL), and Glu499. Residues Ser502 and Arg506 each coordinate L-aspartate. 547-550 (GLER) contributes to the ATP binding site.

Belongs to the class-II aminoacyl-tRNA synthetase family. Type 2 subfamily.

The protein localises to the cytoplasm. The enzyme catalyses tRNA(Asp) + L-aspartate + ATP = L-aspartyl-tRNA(Asp) + AMP + diphosphate. This Dictyostelium discoideum (Social amoeba) protein is Aspartate--tRNA ligase, cytoplasmic 1 (aspS1).